We begin with the raw amino-acid sequence, 317 residues long: MPIHGAPRKLLGSLNSTPTATPKLGLAANHTGAPCLEVSIPDGLFLSLGLVSLVENVLVVAAIAKNRNLHSPMYCFICCLALSDLLVSGSNMLEMAVVLLLEGGALATRASVVQQLHNTIDVLTCSSMLCSLCFLGAIAVDRHISIFYALRYHSIMTLPRAQRVIAAIWVASILSSTLFITYYDHAAVLLCLVVFFLAMLVLMAVLYVHMLARACQHAQGITRLHKRQPPAHQGFGLRGAATLTILLGIFFLCWGPFFLHLKLVVFCPQHLTCSCIFKNFKVFLTLIICNTIIDPLIYAFRSQELRRTLKEVLLCSW.

Residues 1–37 (MPIHGAPRKLLGSLNSTPTATPKLGLAANHTGAPCLE) are Extracellular-facing. N-linked (GlcNAc...) asparagine glycosylation occurs at asparagine 29. Residues 38–63 (VSIPDGLFLSLGLVSLVENVLVVAAI) traverse the membrane as a helical segment. Topologically, residues 64 to 72 (AKNRNLHSP) are cytoplasmic. Residues 73 to 93 (MYCFICCLALSDLLVSGSNML) form a helical membrane-spanning segment. At 94–118 (EMAVVLLLEGGALATRASVVQQLHN) the chain is on the extracellular side. Residues 119–140 (TIDVLTCSSMLCSLCFLGAIAV) form a helical membrane-spanning segment. Over 141–163 (DRHISIFYALRYHSIMTLPRAQR) the chain is Cytoplasmic. The chain crosses the membrane as a helical span at residues 164–183 (VIAAIWVASILSSTLFITYY). The Extracellular portion of the chain corresponds to 184–191 (DHAAVLLC). A helical membrane pass occupies residues 192–211 (LVVFFLAMLVLMAVLYVHML). Residues 212-240 (ARACQHAQGITRLHKRQPPAHQGFGLRGA) are Cytoplasmic-facing. The chain crosses the membrane as a helical span at residues 241-266 (ATLTILLGIFFLCWGPFFLHLKLVVF). Residues 267 to 279 (CPQHLTCSCIFKN) are Extracellular-facing. Residues 280–300 (FKVFLTLIICNTIIDPLIYAF) traverse the membrane as a helical segment. The Cytoplasmic segment spans residues 301–317 (RSQELRRTLKEVLLCSW). Cysteine 315 carries the S-palmitoyl cysteine lipid modification.

This sequence belongs to the G-protein coupled receptor 1 family. In terms of assembly, interacts with MGRN1, but does not undergo MGRN1-mediated ubiquitination; this interaction competes with GNAS-binding and thus inhibits agonist-induced cAMP production. Interacts with OPN3; the interaction results in a decrease in MC1R-mediated cAMP signaling and ultimately a decrease in melanin production in melanocytes.

It is found in the cell membrane. Its function is as follows. Receptor for MSH (alpha, beta and gamma) and ACTH. The activity of this receptor is mediated by G proteins which activate adenylate cyclase. Mediates melanogenesis, the production of eumelanin (black/brown) and phaeomelanin (red/yellow), via regulation of cAMP signaling in melanocytes. The chain is Melanocyte-stimulating hormone receptor (MC1R) from Saimiri oerstedii (Central American squirrel monkey).